Reading from the N-terminus, the 910-residue chain is E3 ubiquitin-protein ligase HUL5 (910 aa).

At methionine 1 the chain carries N-acetylmethionine. Residues 1–25 (MLNFTGQTRRRNVNLGNRTRNSKKD) are disordered. The HECT domain maps to 810–910 (YGGYKEEDQT…INSGARFDLS (101 aa)). Cysteine 878 (glycyl thioester intermediate) is an active-site residue.

This sequence belongs to the UBE3C family. In terms of assembly, interacts with 19S proteasomes.

It localises to the cytoplasm. The protein resides in the cytosol. The protein localises to the nucleus. It catalyses the reaction S-ubiquitinyl-[E2 ubiquitin-conjugating enzyme]-L-cysteine + [acceptor protein]-L-lysine = [E2 ubiquitin-conjugating enzyme]-L-cysteine + N(6)-ubiquitinyl-[acceptor protein]-L-lysine.. The protein operates within protein modification; protein ubiquitination. Its function is as follows. Non-essential E3 ubiquitin-protein ligase that specifically catalyzes 'Lys-29'- and 'Lys-48'-linked polyubiquitin chains. Accepts ubiquitin from an E2 ubiquitin-conjugating enzyme in the form of a thioester and then directly transfers the ubiquitin to targeted substrates. Associates with the proteasome and promotes elongation of ubiquitin chains on substrates bound to the proteasome. Elongation of ubiquitin chains on substrates bound to the proteasome promotes proteasomal processivity. Also promotes ubiquitin elongation of 26S proteasome subunit RPN10. Involved in the stress response required to maintain cell fitness following heat-shock: acts by mediating ubiquitination of cytosolic misfolded proteins, leading to their subsequent degradation. This Saccharomyces cerevisiae (strain ATCC 204508 / S288c) (Baker's yeast) protein is E3 ubiquitin-protein ligase HUL5.